We begin with the raw amino-acid sequence, 350 residues long: Eukaryotic translation initiation factor 3 subunit I (350 aa).

WD repeat units follow at residues 8–49 (GHER…GTLE), 51–89 (HQGV…CVYT), 91–135 (DSPS…ATLS), 149–188 (SEGS…LVTS), 198–240 (EKNV…KVYK), and 296–335 (GHFG…QDFL).

The protein belongs to the eIF-3 subunit I family. Component of the eukaryotic translation initiation factor 3 (eIF-3) complex.

Its subcellular location is the cytoplasm. Its function is as follows. Component of the eukaryotic translation initiation factor 3 (eIF-3) complex, which is involved in protein synthesis of a specialized repertoire of mRNAs and, together with other initiation factors, stimulates binding of mRNA and methionyl-tRNAi to the 40S ribosome. The eIF-3 complex specifically targets and initiates translation of a subset of mRNAs involved in cell proliferation. The polypeptide is Eukaryotic translation initiation factor 3 subunit I (Candida albicans (strain SC5314 / ATCC MYA-2876) (Yeast)).